Consider the following 507-residue polypeptide: ATP synthase subunit alpha (507 aa).

Position 170–177 (170–177 (GDRKTGKT)) interacts with ATP.

Belongs to the ATPase alpha/beta chains family. F-type ATPases have 2 components, CF(1) - the catalytic core - and CF(0) - the membrane proton channel. CF(1) has five subunits: alpha(3), beta(3), gamma(1), delta(1), epsilon(1). CF(0) has three main subunits: a(1), b(2) and c(9-12). The alpha and beta chains form an alternating ring which encloses part of the gamma chain. CF(1) is attached to CF(0) by a central stalk formed by the gamma and epsilon chains, while a peripheral stalk is formed by the delta and b chains.

The protein localises to the cell inner membrane. The catalysed reaction is ATP + H2O + 4 H(+)(in) = ADP + phosphate + 5 H(+)(out). Its function is as follows. Produces ATP from ADP in the presence of a proton gradient across the membrane. The alpha chain is a regulatory subunit. The chain is ATP synthase subunit alpha from Anaplasma marginale (strain Florida).